The primary structure comprises 134 residues: Replication enhancer protein (134 aa).

Belongs to the geminiviridae replication enhancer protein family. As to quaternary structure, homooligomer. Interacts with the replication-associated protein (REP). Interacts with host proliferating cell nuclear antigen (PCNA). Interacts with host retinoblastoma-related protein 1 (RBR1), and may thereby deregulate the host cell cycle. Oligomerization and interaction with PCNA are necessary for optimal replication enhancement.

In terms of biological role, increases viral DNA accumulation. Enhances infectivity and symptom expression. This chain is Replication enhancer protein, found in African cassava mosaic virus (isolate West Kenyan 844) (ACMV).